Reading from the N-terminus, the 80-residue chain is Cell division activator CedA (80 aa).

It belongs to the CedA family.

Its function is as follows. Activates the cell division inhibited by chromosomal DNA over-replication. This Citrobacter koseri (strain ATCC BAA-895 / CDC 4225-83 / SGSC4696) protein is Cell division activator CedA.